The primary structure comprises 251 residues: tRNA1(Val) (adenine(37)-N6)-methyltransferase (251 aa).

It belongs to the methyltransferase superfamily. tRNA (adenine-N(6)-)-methyltransferase family.

The protein resides in the cytoplasm. It catalyses the reaction adenosine(37) in tRNA1(Val) + S-adenosyl-L-methionine = N(6)-methyladenosine(37) in tRNA1(Val) + S-adenosyl-L-homocysteine + H(+). Its function is as follows. Specifically methylates the adenine in position 37 of tRNA(1)(Val) (anticodon cmo5UAC). In Yersinia enterocolitica serotype O:8 / biotype 1B (strain NCTC 13174 / 8081), this protein is tRNA1(Val) (adenine(37)-N6)-methyltransferase.